The following is a 324-amino-acid chain: Olfactory receptor 52N5 (324 aa).

The Extracellular segment spans residues 1-33 (MPLFNSLCWFPTIHVTPPSFILNGIPGLERVHV). A helical membrane pass occupies residues 34–54 (WISLPLCTMYIIFLVGNLGLV). Topologically, residues 55–62 (YLIYYEES) are cytoplasmic. The helical transmembrane segment at 63-84 (LHHPMYFFFGHALSLIDLLTCT) threads the bilayer. The Extracellular segment spans residues 85–108 (TTLPNALCIFWFSLKEINFNACLA). The cysteines at positions 106 and 198 are disulfide-linked. Residues 109-129 (QMFFVHGFTGVESGVLMLMAL) form a helical membrane-spanning segment. Residues 130–148 (DRYVAICYPLRYATTLTNP) are Cytoplasmic-facing. Residues 149-169 (IIAKAELATFLRGVLLMIPFP) form a helical membrane-spanning segment. The Extracellular segment spans residues 170–205 (FLVKRLPFCQSNIISHTYCDHMSVVKLSCASIKVNV). A helical transmembrane segment spans residues 206 to 226 (IYGLMVALLIGVFDICCISLS). The Cytoplasmic segment spans residues 227–246 (YTLILKAAISLSSSDARQKA). The helical transmembrane segment at 247–267 (FSTCTAHISAIIITYVPAFFT) threads the bilayer. Residues 268 to 283 (FFAHRFGGHTIPPSLH) are Extracellular-facing. The helical transmembrane segment at 284 to 304 (IIVANLYLLLPPTLNPIVYGV) threads the bilayer. Residues 305 to 324 (KTKQIRKSVIKFFQGDKGAG) lie on the Cytoplasmic side of the membrane.

This sequence belongs to the G-protein coupled receptor 1 family.

The protein localises to the cell membrane. Functionally, odorant receptor. This chain is Olfactory receptor 52N5 (OR52N5), found in Homo sapiens (Human).